The sequence spans 198 residues: Probable molybdenum cofactor guanylyltransferase (198 aa).

GTP contacts are provided by residues 9 to 11 (LAG), Lys-22, Asp-66, and Asp-95. Asp-95 provides a ligand contact to Mg(2+).

Belongs to the MobA family. Mg(2+) serves as cofactor.

It is found in the cytoplasm. It carries out the reaction Mo-molybdopterin + GTP + H(+) = Mo-molybdopterin guanine dinucleotide + diphosphate. Functionally, transfers a GMP moiety from GTP to Mo-molybdopterin (Mo-MPT) cofactor (Moco or molybdenum cofactor) to form Mo-molybdopterin guanine dinucleotide (Mo-MGD) cofactor. The sequence is that of Probable molybdenum cofactor guanylyltransferase from Clostridium perfringens (strain ATCC 13124 / DSM 756 / JCM 1290 / NCIMB 6125 / NCTC 8237 / Type A).